The primary structure comprises 668 residues: GTP-binding protein 1 (668 aa).

The segment at 1–32 (MAAERSRSPVDSPVPASMFAPEPSSPGAARAA) is disordered. Residues Ser6, Ser8, Ser12, Ser24, Ser25, Ser44, Ser47, and Ser69 each carry the phosphoserine modification. Residues 158–389 (FLEVRVAVVG…LNLLSPRTSY (232 aa)) enclose the tr-type G domain. The tract at residues 167–174 (GNVDAGKS) is G1. Residue 167–174 (GNVDAGKS) participates in GTP binding. A G2 region spans residues 206–210 (GRTSS). A G3 region spans residues 252-255 (DLAG). GTP is bound by residues 252–256 (DLAGH) and 308–311 (TKID). A G4 region spans residues 308 to 311 (TKID). The G5 stretch occupies residues 366–368 (SNV). Positions 573 to 595 (LLQTTNNSPMNSKPQQIKMQSTK) are enriched in polar residues. The segment at 573 to 668 (LLQTTNNSPM…GACVTPASGC (96 aa)) is disordered. At Ser580 the chain carries Phosphoserine. Residues 609-619 (GVPAAGGPPTG) show a composition bias toward low complexity. Residues 624–637 (SLGTAQAASTSGLQ) show a composition bias toward polar residues. The segment covering 646–657 (GRRRGGQRHKVK) has biased composition (basic residues).

Belongs to the TRAFAC class translation factor GTPase superfamily. Classic translation factor GTPase family. GTPBP1 subfamily. In terms of assembly, interacts with EXOSC2/RRP4, EXOSC3/RRP40, EXOSC5/RRP46, HNRNPD, HNRNPR and SYNCRIP. Identified in a complex with AANAT mRNA, but does not bind mRNA by itself. As to expression, detected in some neurons in the brain cortex. Detected in small arteries, dendritic cells and macrophages in the thymus. Detected in lung bronchi, in bronchial epithelial cells and in bronchial smooth muscle cells. Detected in smooth muscle cells in a broad range of organs (at protein level). Expressed in brain, thymus, lung, and kidney.

It is found in the cytoplasm. In terms of biological role, promotes degradation of target mRNA species. Plays a role in the regulation of circadian mRNA stability. Binds GTP and has GTPase activity. The polypeptide is GTP-binding protein 1 (Gtpbp1) (Mus musculus (Mouse)).